We begin with the raw amino-acid sequence, 484 residues long: tRNA-2-methylthio-N(6)-dimethylallyladenosine synthase (484 aa).

One can recognise an MTTase N-terminal domain in the interval 36-153 (GKLYIKTHGC…LPELIRARRE (118 aa)). 6 residues coordinate [4Fe-4S] cluster: C45, C82, C116, C190, C194, and C197. The 240-residue stretch at 176-415 (RAEGPSAFVS…HINAHAASIS (240 aa)) folds into the Radical SAM core domain. The TRAM domain maps to 416–479 (QSMVGSVQRV…SNSLRGRIQL (64 aa)). Positions 428–450 (EGPSRRDPNELTGKSENMRPVNF) are disordered.

Belongs to the methylthiotransferase family. MiaB subfamily. In terms of assembly, monomer. Requires [4Fe-4S] cluster as cofactor.

The protein resides in the cytoplasm. The enzyme catalyses N(6)-dimethylallyladenosine(37) in tRNA + (sulfur carrier)-SH + AH2 + 2 S-adenosyl-L-methionine = 2-methylsulfanyl-N(6)-dimethylallyladenosine(37) in tRNA + (sulfur carrier)-H + 5'-deoxyadenosine + L-methionine + A + S-adenosyl-L-homocysteine + 2 H(+). In terms of biological role, catalyzes the methylthiolation of N6-(dimethylallyl)adenosine (i(6)A), leading to the formation of 2-methylthio-N6-(dimethylallyl)adenosine (ms(2)i(6)A) at position 37 in tRNAs that read codons beginning with uridine. This chain is tRNA-2-methylthio-N(6)-dimethylallyladenosine synthase, found in Xanthomonas axonopodis pv. citri (strain 306).